Here is a 467-residue protein sequence, read N- to C-terminus: Cysteine--tRNA ligase (467 aa).

Cysteine 28 serves as a coordination point for Zn(2+). The 'HIGH' region signature appears at 30-40 (MTVYDYCHLGH). Zn(2+) is bound by residues cysteine 209, histidine 234, and glutamate 238. The short motif at 266-270 (KMSKS) is the 'KMSKS' region element. Residue lysine 269 coordinates ATP.

It belongs to the class-I aminoacyl-tRNA synthetase family. As to quaternary structure, monomer. It depends on Zn(2+) as a cofactor.

Its subcellular location is the cytoplasm. It carries out the reaction tRNA(Cys) + L-cysteine + ATP = L-cysteinyl-tRNA(Cys) + AMP + diphosphate. The protein is Cysteine--tRNA ligase of Hahella chejuensis (strain KCTC 2396).